The following is a 523-amino-acid chain: Glycerate kinase (523 aa).

Position 60 is a phosphoserine (Ser60). Lys200 is subject to N6-acetyllysine.

The protein belongs to the glycerate kinase type-2 family.

It is found in the cytoplasm. The enzyme catalyses (R)-glycerate + ATP = (2R)-3-phosphoglycerate + ADP + H(+). This chain is Glycerate kinase (GLYCTK), found in Bos taurus (Bovine).